The primary structure comprises 680 residues: DNA ligase 1 (680 aa).

Residues 35-39 (DAEYD), 84-85 (SL), and Asp115 each bind NAD(+). Catalysis depends on Lys117, which acts as the N6-AMP-lysine intermediate. NAD(+)-binding residues include Arg138, Glu175, Lys295, and Lys319. Positions 413, 416, 431, and 436 each coordinate Zn(2+). Residues 599-680 (REGSQLQGLK…FANLLKGLDR (82 aa)) enclose the BRCT domain.

It belongs to the NAD-dependent DNA ligase family. LigA subfamily. It depends on Mg(2+) as a cofactor. Mn(2+) serves as cofactor.

The enzyme catalyses NAD(+) + (deoxyribonucleotide)n-3'-hydroxyl + 5'-phospho-(deoxyribonucleotide)m = (deoxyribonucleotide)n+m + AMP + beta-nicotinamide D-nucleotide.. Functionally, DNA ligase that catalyzes the formation of phosphodiester linkages between 5'-phosphoryl and 3'-hydroxyl groups in double-stranded DNA using NAD as a coenzyme and as the energy source for the reaction. It is essential for DNA replication and repair of damaged DNA. The sequence is that of DNA ligase 1 from Nitratidesulfovibrio vulgaris (strain DP4) (Desulfovibrio vulgaris).